Here is a 372-residue protein sequence, read N- to C-terminus: D-alanine--D-alanine ligase (372 aa).

Residues 145–349 (KTVLRAGGIP…CPNLLDQLIE (205 aa)) enclose the ATP-grasp domain. Residue 176 to 231 (DRWGTSELFVKAVSLGSSVATLPVKTETEFTKAVKEVFRYDDRLMVEPRIRGREIE) coordinates ATP. Positions 303, 316, and 318 each coordinate Mg(2+).

This sequence belongs to the D-alanine--D-alanine ligase family. Mg(2+) is required as a cofactor. Requires Mn(2+) as cofactor.

It localises to the cytoplasm. It catalyses the reaction 2 D-alanine + ATP = D-alanyl-D-alanine + ADP + phosphate + H(+). It participates in cell wall biogenesis; peptidoglycan biosynthesis. Cell wall formation. This Coxiella burnetii (strain Dugway 5J108-111) protein is D-alanine--D-alanine ligase.